The following is a 257-amino-acid chain: Imidazole glycerol phosphate synthase subunit HisF (257 aa).

Residues Asp-12 and Asp-131 contribute to the active site.

Belongs to the HisA/HisF family. As to quaternary structure, heterodimer of HisH and HisF.

Its subcellular location is the cytoplasm. It carries out the reaction 5-[(5-phospho-1-deoxy-D-ribulos-1-ylimino)methylamino]-1-(5-phospho-beta-D-ribosyl)imidazole-4-carboxamide + L-glutamine = D-erythro-1-(imidazol-4-yl)glycerol 3-phosphate + 5-amino-1-(5-phospho-beta-D-ribosyl)imidazole-4-carboxamide + L-glutamate + H(+). Its pathway is amino-acid biosynthesis; L-histidine biosynthesis; L-histidine from 5-phospho-alpha-D-ribose 1-diphosphate: step 5/9. Functionally, IGPS catalyzes the conversion of PRFAR and glutamine to IGP, AICAR and glutamate. The HisF subunit catalyzes the cyclization activity that produces IGP and AICAR from PRFAR using the ammonia provided by the HisH subunit. The sequence is that of Imidazole glycerol phosphate synthase subunit HisF from Rhodococcus jostii (strain RHA1).